A 299-amino-acid polypeptide reads, in one-letter code: MSLSVLSRQDKEKVIHRLLIQAPPGEFVNAFDDLCLLIRDEKLMHHQGECAGHQHCQKYCVPLCIDGNPVLLSHHNVMGDFRFFDYQSKLSFRFDLLQNQLRDIQSHGIIRNENEYLRSVVMCALKLYVNDHYPNGNCNVLRKTVKNKEFLIACIEKHSYDNGECWNGLWKSKWIFQVNPFLTQVTGRIFVQAHYFRCVNLHVEVSKDLKESLEVVNQAQLALSFARLVEEQENKFQAAVIEELQELSNEALRKILRRDLPVTRTLIDWQRILSDLNLVMYPKLGYVIYSRSVLCNWII.

Phosphoserine occurs at positions 2 and 290.

Belongs to the F-actin-capping protein alpha subunit family. In terms of assembly, component of the F-actin capping complex, composed of a heterodimer of an alpha and a beta subunit. Component of the WASH complex, composed of F-actin-capping protein subunit alpha (CAPZA1, CAPZA2 or CAPZA3), F-actin-capping protein subunit beta (CAPZB), WASHC1, WASHC2, WASHC3, WASHC4 and WASHC5. Exclusively expressed in the testis.

The protein localises to the cytoplasm. Its subcellular location is the cytoskeleton. Functionally, F-actin-capping proteins bind in a Ca(2+)-independent manner to the fast growing ends of actin filaments (barbed end) thereby blocking the exchange of subunits at these ends. Unlike other capping proteins (such as gelsolin and severin), these proteins do not sever actin filaments. May play a role in the morphogenesis of spermatid. This Rattus norvegicus (Rat) protein is F-actin-capping protein subunit alpha-3 (Capza3).